The chain runs to 339 residues: DNA-directed RNA polymerase subunit alpha (339 aa).

Positions 1-235 are alpha N-terminal domain (alpha-NTD); sequence MVIQKNWQEL…DQLQVFVNFE (235 aa). Residues 251-339 are alpha C-terminal domain (alpha-CTD); that stretch reads FNPALLKKVD…DLAKRFEEHY (89 aa).

Belongs to the RNA polymerase alpha chain family. Homodimer. The RNAP catalytic core consists of 2 alpha, 1 beta, 1 beta' and 1 omega subunit. When a sigma factor is associated with the core the holoenzyme is formed, which can initiate transcription.

It carries out the reaction RNA(n) + a ribonucleoside 5'-triphosphate = RNA(n+1) + diphosphate. In terms of biological role, DNA-dependent RNA polymerase catalyzes the transcription of DNA into RNA using the four ribonucleoside triphosphates as substrates. This is DNA-directed RNA polymerase subunit alpha from Methylorubrum populi (strain ATCC BAA-705 / NCIMB 13946 / BJ001) (Methylobacterium populi).